The chain runs to 163 residues: uncharacterized protein (163 aa).

Residues 128-163 (PKKEKIKKAKRKKKGAKRASKKQKAKSKSARKSRRV) form a disordered region. Residues 129 to 163 (KKEKIKKAKRKKKGAKRASKKQKAKSKSARKSRRV) are compositionally biased toward basic residues.

This is an uncharacterized protein from Sulfurisphaera tokodaii (strain DSM 16993 / JCM 10545 / NBRC 100140 / 7) (Sulfolobus tokodaii).